The sequence spans 162 residues: Retinoic acid receptor responder protein 2 (162 aa).

An N-terminal signal peptide occupies residues 1 to 20 (MWQLLLPLALGLGTMGLGRA). 3 disulfides stabilise this stretch: cysteine 77-cysteine 87, cysteine 98-cysteine 117, and cysteine 101-cysteine 135. The propeptide occupies 156-162 (FIKALSP).

Secreted in an inactive precursor form, prochemerin, which is proteolytically processed by a variety of extracellular proteases to generate forms with differing levels of bioactivity. For example, the removal of five amino acids results in chemerin-157, which exhibits the highest activity, while removal of six amino acids results in chemerin-156 which has slightly less activity. Some proteases are able to cleave at more than one site and chemerin forms may be sequentially processed by different enzymes to modulate activity levels. The coordinated expression and activity of chemerin-modifying enzymes is essential for regulating its bioactivation, inactivation and, consequently, biological function. Cathepsin G cleaves six C-terminal amino acids from prochemerin (chemerin-156), elastase is able to cleave five (chemerin-157), seven (chemerin-155) or ten (chemerin-152), plasmin cleaves four amino acids (chemerin-158), and tryptase cleaves four (chemerin-158) or seven (chemerin-155). Multiple cleavages might be required to fully activate chemerin, with an initial tryptase cleavage resulting in chemerin with low activity (chemerin-158), and a second cleavage by carboxypeptidase N or B producing highly active chemerin (chemerin-157).

It localises to the secreted. In terms of biological role, adipocyte-secreted protein (adipokine) that regulates adipogenesis, metabolism and inflammation through activation of the chemokine-like receptor 1 (CMKLR1). Also acts as a ligand for CMKLR2. Can also bind to C-C chemokine receptor-like 2 (CCRL2), but with a lower affinity than it does to CMKLR1 or CMKLR2. Positively regulates adipocyte differentiation, modulates the expression of adipocyte genes involved in lipid and glucose metabolism and might play a role in angiogenesis, a process essential for the expansion of white adipose tissue. Also acts as a pro-inflammatory adipokine, causing an increase in secretion of pro-inflammatory and prodiabetic adipokines, which further impair adipose tissue metabolic function and have negative systemic effects including impaired insulin sensitivity, altered glucose and lipid metabolism, and a decrease in vascular function in other tissues. Can have both pro- and anti-inflammatory properties depending on the modality of enzymatic cleavage by different classes of proteases. Acts as a chemotactic factor for leukocyte populations expressing CMKLR1, particularly immature plasmacytoid dendritic cells, but also immature myeloid DCs, macrophages and natural killer cells. Exerts an anti-inflammatory role by preventing TNF/TNFA-induced VCAM1 expression and monocytes adhesion in vascular endothelial cells. The effect is mediated via inhibiting activation of NF-kappa-B and CRK/p38 through stimulation of AKT1/NOS3 signaling and nitric oxide production. Exhibits an antimicrobial function in the skin. This chain is Retinoic acid receptor responder protein 2 (RARRES2), found in Bos taurus (Bovine).